A 712-amino-acid polypeptide reads, in one-letter code: Cyclolysin secretion/processing ATP-binding protein CyaB (712 aa).

The Peptidase C39 domain maps to 7–128; it reads QCASVPDSGL…ALWAGELLLC (122 aa). The 283-residue stretch at 157-439 folds into the ABC transmembrane type-1 domain; the sequence is IGEVLLISLV…LAQLWNDFQQ (283 aa). 6 consecutive transmembrane segments (helical) span residues 160–180, 194–214, 272–292, 298–318, 367–387, and 390–410; these read VLLI…FFQV, LNVI…LTGI, AVTV…MFFY, LVVL…TPVL, VAAG…VTLI, and LVAL…RMTV. One can recognise an ABC transporter domain in the interval 471-706; the sequence is IELDRVSFRY…GGLYARLQAL (236 aa). 505 to 512 is a binding site for ATP; it reads GRSGSGKS.

The protein belongs to the ABC transporter superfamily. Cyclolysin exporter (TC 3.A.1.109.2) family.

The protein resides in the cell membrane. In terms of biological role, involved in the export of calmodulin-sensitive adenylate cyclase-hemolysin (cyclolysin). The sequence is that of Cyclolysin secretion/processing ATP-binding protein CyaB (cyaB) from Bordetella pertussis (strain Tohama I / ATCC BAA-589 / NCTC 13251).